Consider the following 632-residue polypeptide: ATP-dependent zinc metalloprotease FtsH (632 aa).

Residues 1–9 lie on the Cytoplasmic side of the membrane; it reads MKPTNEPKK. Residues 10–30 traverse the membrane as a helical segment; that stretch reads PFFQSPIILAVLGGILLIFFL. Over 31-116 the chain is Periplasmic; the sequence is RSFNSDGSFS…INYSGFSESN (86 aa). A helical transmembrane segment spans residues 117-137; that stretch reads FFTDMLGWLMPILVILGLWMF. Residues 138–632 lie on the Cytoplasmic side of the membrane; it reads MANRMQKNMG…RLIPLEEQAS (495 aa). ATP contacts are provided by residues A173, 213–217, and H354; that span reads GTGKT. Residue H434 participates in Zn(2+) binding. E435 is an active-site residue. Zn(2+)-binding residues include H438 and D511.

It in the central section; belongs to the AAA ATPase family. This sequence in the C-terminal section; belongs to the peptidase M41 family. Homohexamer. The cofactor is Zn(2+).

It localises to the cell inner membrane. In terms of biological role, acts as a processive, ATP-dependent zinc metallopeptidase for both cytoplasmic and membrane proteins. Plays a role in the quality control of integral membrane proteins. This chain is ATP-dependent zinc metalloprotease FtsH, found in Helicobacter pylori (strain ATCC 700392 / 26695) (Campylobacter pylori).